Reading from the N-terminus, the 353-residue chain is Variable large protein 17 (353 aa).

A signal peptide spans 1–18 (MRKRISAIIMTLFMVLVS). C19 carries N-palmitoyl cysteine lipidation. C19 carries the S-diacylglycerol cysteine lipid modification. A disordered region spans residues 332-353 (EDKSVEATNTAEATTSGQQAKN). A compositionally biased stretch (polar residues) spans 337–353 (EATNTAEATTSGQQAKN).

Belongs to the variable large protein (Vlp) family. Delta subfamily.

It is found in the cell outer membrane. Functionally, the Vlp and Vsp proteins are antigenically distinct proteins, only one vlp or vsp gene is transcriptionally active at any one time. Switching between these genes is a mechanism of host immune response evasion. The polypeptide is Variable large protein 17 (Borrelia hermsii).